The chain runs to 175 residues: MSLNRSEKEAVINEVTSLAAKAQTLVIAEYRGITVADMTKLRSDARSKGVSLSVLKNTLARRAVAGSQFDVVADQMTGPLIYGFSEDAVAAAKVVADFAKTNDKLVIRGGAFAGKALDVNGVKQLANIPSKEVLLAQLCGLLMSPISRTAVVLGALAAKKSEGSAEEPAAEAVAA.

This sequence belongs to the universal ribosomal protein uL10 family. Part of the ribosomal stalk of the 50S ribosomal subunit. The N-terminus interacts with L11 and the large rRNA to form the base of the stalk. The C-terminus forms an elongated spine to which L12 dimers bind in a sequential fashion forming a multimeric L10(L12)X complex.

Its function is as follows. Forms part of the ribosomal stalk, playing a central role in the interaction of the ribosome with GTP-bound translation factors. This is Large ribosomal subunit protein uL10 from Delftia acidovorans (strain DSM 14801 / SPH-1).